A 431-amino-acid chain; its full sequence is Putative F-box/FBD/LRR-repeat protein At3g56780 (431 aa).

The 57-residue stretch at 6 to 62 folds into the F-box domain; it reads CSCINELPDDLILKILSFVSTKHVVVTSLLSKKWKSLWTRVPILKYDVRDHTRFERF. LRR repeat units lie at residues 56-82, 88-113, 135-161, 162-187, 209-236, 237-262, 264-285, and 357-382; these read HTRFERFLDKSLFSHQSHVLESLHVEL, NKDIGPWIRTALHHHHCHLRELEIDA, LKGIVIDVEAPLTTVSLPSLKTLHIDH, SSLFDFGSLQMLLSNCNFITDLMVIR, LEGLKDVISISSSSAVCLPLLKTLHVAR, MEDFNNDSFCRLLSNCPVLSDLTLEE, TSDVLLNLDIDMPYLQRLSIIT, and CSERSVEMLVDLLLCFTKLVVLKLEH. Residues 391–423 form the FBD domain; sequence RWEPPSLVPECLLSSLEALEWKGYTGRYGDKDL.

The chain is Putative F-box/FBD/LRR-repeat protein At3g56780 from Arabidopsis thaliana (Mouse-ear cress).